The chain runs to 198 residues: Transcription factor BHLH133 (198 aa).

A basic motif; degenerate region spans residues 114-127; the sequence is SAESSQSYYAKNRR. Residues 114–163 enclose the bHLH domain; that stretch reads SAESSQSYYAKNRRQRINERLRILQELIPNGTKVDISTMLEEAIQYVKFL. The interval 128–163 is helix-loop-helix motif; sequence QRINERLRILQELIPNGTKVDISTMLEEAIQYVKFL.

It belongs to the bHLH protein family.

Its subcellular location is the nucleus. Its function is as follows. Transcription factor that acts as a regulator of iron homeostasis. May act as negative regulator of iron transportation from root to shoot. Does not seem to be involved in the suppression of the induction of iron deficiency responsive genes. The protein is Transcription factor BHLH133 of Oryza sativa subsp. japonica (Rice).